The sequence spans 896 residues: Probable DNA-directed RNA polymerase (896 aa).

Residues Asp-546, Lys-617, and Asp-798 contribute to the active site.

It belongs to the phage and mitochondrial RNA polymerase family.

It is found in the mitochondrion. It catalyses the reaction RNA(n) + a ribonucleoside 5'-triphosphate = RNA(n+1) + diphosphate. Its function is as follows. DNA-dependent RNA polymerase catalyzes the transcription of DNA into RNA using the four ribonucleoside triphosphates as substrates. This chain is Probable DNA-directed RNA polymerase, found in Neurospora crassa.